Here is a 97-residue protein sequence, read N- to C-terminus: Large ribosomal subunit protein bL28 (97 aa).

The protein belongs to the bacterial ribosomal protein bL28 family.

This Brucella abortus (strain S19) protein is Large ribosomal subunit protein bL28.